Reading from the N-terminus, the 294-residue chain is N-acetylmuramic acid 6-phosphate etherase (294 aa).

In terms of domain architecture, SIS spans 54 to 217 (TIHSFKSNGR…STASMIGVGK (164 aa)). The active-site Proton donor is E82. The active site involves E113.

The protein belongs to the GCKR-like family. MurNAc-6-P etherase subfamily. As to quaternary structure, homodimer.

The catalysed reaction is N-acetyl-D-muramate 6-phosphate + H2O = N-acetyl-D-glucosamine 6-phosphate + (R)-lactate. It participates in amino-sugar metabolism; N-acetylmuramate degradation. Specifically catalyzes the cleavage of the D-lactyl ether substituent of MurNAc 6-phosphate, producing GlcNAc 6-phosphate and D-lactate. The sequence is that of N-acetylmuramic acid 6-phosphate etherase from Oceanobacillus iheyensis (strain DSM 14371 / CIP 107618 / JCM 11309 / KCTC 3954 / HTE831).